Here is a 399-residue protein sequence, read N- to C-terminus: Dual-specificity RNA methyltransferase RlmN (399 aa).

The Proton acceptor role is filled by Glu-120. A Radical SAM core domain is found at 126-367 (EEGRGTLCVS…SPVRTPRGRD (242 aa)). A disulfide bridge connects residues Cys-133 and Cys-372. [4Fe-4S] cluster-binding residues include Cys-140, Cys-144, and Cys-147. S-adenosyl-L-methionine contacts are provided by residues 198–199 (GE), Ser-230, 252–254 (SLH), and Asn-329. Residue Cys-372 is the S-methylcysteine intermediate of the active site.

This sequence belongs to the radical SAM superfamily. RlmN family. Requires [4Fe-4S] cluster as cofactor.

The protein resides in the cytoplasm. The enzyme catalyses adenosine(2503) in 23S rRNA + 2 reduced [2Fe-2S]-[ferredoxin] + 2 S-adenosyl-L-methionine = 2-methyladenosine(2503) in 23S rRNA + 5'-deoxyadenosine + L-methionine + 2 oxidized [2Fe-2S]-[ferredoxin] + S-adenosyl-L-homocysteine. It carries out the reaction adenosine(37) in tRNA + 2 reduced [2Fe-2S]-[ferredoxin] + 2 S-adenosyl-L-methionine = 2-methyladenosine(37) in tRNA + 5'-deoxyadenosine + L-methionine + 2 oxidized [2Fe-2S]-[ferredoxin] + S-adenosyl-L-homocysteine. In terms of biological role, specifically methylates position 2 of adenine 2503 in 23S rRNA and position 2 of adenine 37 in tRNAs. m2A2503 modification seems to play a crucial role in the proofreading step occurring at the peptidyl transferase center and thus would serve to optimize ribosomal fidelity. This Parvibaculum lavamentivorans (strain DS-1 / DSM 13023 / NCIMB 13966) protein is Dual-specificity RNA methyltransferase RlmN.